Reading from the N-terminus, the 279-residue chain is Protein phosphatase 1 regulatory subunit 3E (279 aa).

2 positions are modified to phosphoserine: Ser16 and Ser33. Residues 28 to 89 (RSQRPSLEEE…RSPDTRKRVR (62 aa)) form a disordered region. Residues 51–65 (ARSRAHVPGRGRRAR) are compositionally biased toward basic residues. Residue Ser66 is modified to Phosphoserine. Positions 87-90 (RVRF) match the PP1-binding motif motif. Positions 154–259 (AARLQAQRIC…NNGGRDYALL (106 aa)) constitute a CBM21 domain. A glycogen-binding motif region spans residues 176–198 (GSARVLDLAYEKRVSVRWSADGW). The tract at residues 248 to 256 (WDNNGGRDY) is substrate-binding motif.

Expressed in liver and heart, with low levels in skeletal muscle.

Acts as a glycogen-targeting subunit for PP1. PP1 is involved in glycogen metabolism and contributes to the activation of glycogen synthase leading to an increase in glycogen synthesis. In Rattus norvegicus (Rat), this protein is Protein phosphatase 1 regulatory subunit 3E (Ppp1r3e).